Here is a 322-residue protein sequence, read N- to C-terminus: Gluconeogenesis factor (322 aa).

NAD(+) contacts are provided by residues Thr13, 217 to 219 (NVM), 263 to 267 (KYAKE), and 300 to 301 (RH).

The protein belongs to the gluconeogenesis factor family.

It localises to the cytoplasm. Functionally, required for morphogenesis under gluconeogenic growth conditions. This chain is Gluconeogenesis factor, found in Halalkalibacterium halodurans (strain ATCC BAA-125 / DSM 18197 / FERM 7344 / JCM 9153 / C-125) (Bacillus halodurans).